The following is a 462-amino-acid chain: Argininosuccinate lyase (462 aa).

This sequence belongs to the lyase 1 family. Argininosuccinate lyase subfamily.

The protein localises to the cytoplasm. It catalyses the reaction 2-(N(omega)-L-arginino)succinate = fumarate + L-arginine. It functions in the pathway amino-acid biosynthesis; L-arginine biosynthesis; L-arginine from L-ornithine and carbamoyl phosphate: step 3/3. The sequence is that of Argininosuccinate lyase from Prochlorococcus marinus (strain SARG / CCMP1375 / SS120).